The chain runs to 113 residues: UPF0102 protein SUN_0231 (113 aa).

This sequence belongs to the UPF0102 family.

This Sulfurovum sp. (strain NBC37-1) protein is UPF0102 protein SUN_0231.